We begin with the raw amino-acid sequence, 335 residues long: ATP-dependent 6-phosphofructokinase (335 aa).

Glycine 11 provides a ligand contact to ATP. 21–25 (RAVVR) is a binding site for ADP. Residues 72–73 (RY) and 102–105 (GDGS) contribute to the ATP site. Aspartate 103 is a binding site for Mg(2+). Position 125–127 (125–127 (TID)) interacts with substrate. Aspartate 127 (proton acceptor) is an active-site residue. An ADP-binding site is contributed by arginine 154. Substrate is bound by residues arginine 162 and 169–171 (MGR). ADP-binding positions include 185–187 (GAD) and 213–215 (KKH). Substrate-binding positions include glutamate 222, arginine 244, and 250-253 (HIQR).

The protein belongs to the phosphofructokinase type A (PFKA) family. ATP-dependent PFK group I subfamily. Prokaryotic clade 'B1' sub-subfamily. In terms of assembly, homotetramer. Mg(2+) serves as cofactor.

It is found in the cytoplasm. It catalyses the reaction beta-D-fructose 6-phosphate + ATP = beta-D-fructose 1,6-bisphosphate + ADP + H(+). Its pathway is carbohydrate degradation; glycolysis; D-glyceraldehyde 3-phosphate and glycerone phosphate from D-glucose: step 3/4. With respect to regulation, allosterically activated by ADP and other diphosphonucleosides, and allosterically inhibited by phosphoenolpyruvate. Catalyzes the phosphorylation of D-fructose 6-phosphate to fructose 1,6-bisphosphate by ATP, the first committing step of glycolysis. The protein is ATP-dependent 6-phosphofructokinase of Streptococcus pneumoniae serotype 4 (strain ATCC BAA-334 / TIGR4).